Here is a 745-residue protein sequence, read N- to C-terminus: Mediator of RNA polymerase II transcription subunit 25 (745 aa).

Residues 1–226 (MVPGSEGPAR…PRHMVLVRGL (226 aa)) form an interaction with the Mediator complex region. The segment covering 233–243 (SSTSGSLQTKQ) has biased composition (polar residues). Disordered regions lie at residues 233–266 (SSTS…QALP) and 299–374 (LGPR…VTPG). Over residues 252 to 262 (ASAATLSAAPP) the composition is skewed to low complexity. The segment covering 324–342 (PAPPLAPVPPGAPKPPPAS) has biased composition (pro residues). An interaction with VP16 region spans residues 389 to 543 (LGGQQSVSNK…VNGIRQVITN (155 aa)). Residues 395 to 545 (VSNKLLAWSG…GIRQVITNHK (151 aa)) are interaction with CREBBP. Interaction with RARA stretches follow at residues 563-652 (APPV…LLNP) and 639-705 (PGAN…WPTQ). The tract at residues 584 to 738 (LRAPQPQPQG…PGLQPSVMED (155 aa)) is disordered. Low complexity predominate over residues 596-617 (GASAATGQPQPQGATQAPTGAP). The span at 618 to 631 (QGPPGAAPGPPPSG) shows a compositional bias: pro residues. Residues 645 to 649 (LRSLL) carry the LXXLL motif motif. The segment covering 652 to 663 (PAPPQTGVPPPQ) has biased composition (pro residues). The residue at position 723 (Arg-723) is an Asymmetric dimethylarginine.

It belongs to the Mediator complex subunit 25 family. In terms of assembly, component of the Mediator complex, which is composed of MED1, MED4, MED6, MED7, MED8, MED9, MED10, MED11, MED12, MED13, MED13L, MED14, MED15, MED16, MED17, MED18, MED19, MED20, MED21, MED22, MED23, MED24, MED25, MED26, MED27, MED29, MED30, MED31, CCNC, CDK8 and CDC2L6/CDK11. The MED12, MED13, CCNC and CDK8 subunits form a distinct module termed the CDK8 module. Mediator containing the CDK8 module is less active than Mediator lacking this module in supporting transcriptional activation. Individual preparations of the Mediator complex lacking one or more distinct subunits have been variously termed ARC, CRSP, DRIP, PC2, SMCC and TRAP. Interacts with CREBBP. Interacts with ESR1, GR and THRB in a ligand-dependent fashion. Binds the Herpes simplex virus activator VP16. Interacts with RARA and RXRA in a ligand-dependent fashion.

Its subcellular location is the nucleus. Its function is as follows. Component of the Mediator complex, a coactivator involved in the regulated transcription of nearly all RNA polymerase II-dependent genes. Mediator functions as a bridge to convey information from gene-specific regulatory proteins to the basal RNA polymerase II transcription machinery. Mediator is recruited to promoters by direct interactions with regulatory proteins and serves as a scaffold for the assembly of a functional preinitiation complex with RNA polymerase II and the general transcription factors. Required for RARA/RXRA-mediated transcription. This is Mediator of RNA polymerase II transcription subunit 25 (Med25) from Mus musculus (Mouse).